A 502-amino-acid chain; its full sequence is Alpha-globin transcription factor CP2 (502 aa).

In terms of domain architecture, Grh/CP2 DB spans 63 to 300 (EILPFQYVLC…SPGFNSSHSS (238 aa)). Residues 133–386 (EHQQLEGWRW…LFNALKGRMV (254 aa)) form a DNA-binding region. Positions 241–265 (KGADRKQKIDREKMEKRTPHEKEKY) are enriched in basic and acidic residues. Disordered stretches follow at residues 241–268 (KGAD…YQPS) and 294–326 (FNSS…NLLP). Residue serine 353 is modified to Phosphoserine.

It belongs to the grh/CP2 family. CP2 subfamily. Binds to DNA as a dimer. Interacts with UBP1 and PIAS1, and is probably part of a complex containing TFCP2, UBP1 and PIAS1. Component of the SSP (stage selector protein) complex, which appears to be a heteromer of TFCP2 and 2 copies of NFE4.

The protein resides in the nucleus. Its function is as follows. Binds a variety of cellular promoters including fibrinogen, alpha-globin promoters. Activation of the alpha-globin promoter in erythroid cells is via synergistic interaction with UBP1. Functions as part of the SSP (stage selector protein) complex. Facilitates the interaction of the gamma-globin genes with enhancer elements contained in the locus control region in fetal erythroid cells. Interacts by binding to the stage selector element (SSE) in the proximal gamma-globin promoter. In Mus musculus (Mouse), this protein is Alpha-globin transcription factor CP2 (Tfcp2).